A 504-amino-acid chain; its full sequence is Signal recognition particle subunit SRP54 (504 aa).

An NG domain region spans residues 1 to 295 (MVLADLGRKI…KTQPFISKLL (295 aa)). GTP is bound by residues 108 to 115 (GLQGSGKT), 190 to 194 (DTSGR), and 248 to 251 (TKLD). The interval 296–504 (GMGDIEGLID…MKGMMGFNNM (209 aa)) is M-domain.

It belongs to the GTP-binding SRP family. SRP54 subfamily. Component of a signal recognition particle (SRP) complex that consists of a 7SL RNA molecule of 300 nucleotides and six protein subunits: SRP72, SRP68, SRP54, SRP19, SRP14 and SRP9. Interacts with RNPS1. Interacts with the SRP receptor subunit SRPRA.

The protein localises to the nucleus speckle. It is found in the cytoplasm. The protein resides in the endoplasmic reticulum. The catalysed reaction is GTP + H2O = GDP + phosphate + H(+). In terms of biological role, component of the signal recognition particle (SRP) complex, a ribonucleoprotein complex that mediates the cotranslational targeting of secretory and membrane proteins to the endoplasmic reticulum (ER). As part of the SRP complex, associates with the SRP receptor (SR) component SRPRA to target secretory proteins to the endoplasmic reticulum membrane. Binds to the signal sequence of presecretory proteins when they emerge from the ribosomes. Displays basal GTPase activity, and stimulates reciprocal GTPase activation of the SR subunit SRPRA. Forms a guanosine 5'-triphosphate (GTP)-dependent complex with the SR subunit SRPRA. SR compaction and GTPase mediated rearrangement of SR drive SRP-mediated cotranslational protein translocation into the ER. Requires the presence of SRP9/SRP14 and/or SRP19 to stably interact with RNA. Plays a role in proliferation and differentiation of granulocytic cells, neutrophils migration capacity and exocrine pancreas development. In Homo sapiens (Human), this protein is Signal recognition particle subunit SRP54.